Reading from the N-terminus, the 301-residue chain is Ribonuclease H2 subunit A (301 aa).

M1 is subject to N-acetylmethionine. An RNase H type-2 domain is found at 28–251 (PCVLGVDEAG…AQAILEKEAE (224 aa)). Positions 34, 35, and 142 each coordinate a divalent metal cation. The residue at position 217 (T217) is a Phosphothreonine. A Phosphoserine modification is found at S258.

It belongs to the RNase HII family. Eukaryotic subfamily. The RNase H2 complex is a heterotrimer composed of the catalytic subunit RNASEH2A and the non-catalytic subunits RNASEH2B and RNASEH2C. Requires Mn(2+) as cofactor. Mg(2+) serves as cofactor.

It is found in the nucleus. It carries out the reaction Endonucleolytic cleavage to 5'-phosphomonoester.. Catalytic subunit of RNase HII, an endonuclease that specifically degrades the RNA of RNA:DNA hybrids. Participates in DNA replication, possibly by mediating the removal of lagging-strand Okazaki fragment RNA primers during DNA replication. Mediates the excision of single ribonucleotides from DNA:RNA duplexes. This chain is Ribonuclease H2 subunit A (Rnaseh2a), found in Rattus norvegicus (Rat).